Here is a 561-residue protein sequence, read N- to C-terminus: Carboxylesterase 4A (561 aa).

Positions M1–G20 are cleaved as a signal peptide. Cysteines 88 and 116 form a disulfide. Residue N214 is glycosylated (N-linked (GlcNAc...) asparagine). S221 acts as the Acyl-ester intermediate in catalysis. The cysteines at positions 273 and 284 are disulfide-linked. Residue N276 is glycosylated (N-linked (GlcNAc...) asparagine). The active-site Charge relay system is E353. N388 carries an N-linked (GlcNAc...) asparagine glycan. The Charge relay system role is filled by H467.

The protein belongs to the type-B carboxylesterase/lipase family.

It is found in the secreted. In terms of biological role, probable carboxylesterase. This chain is Carboxylesterase 4A (CES4A), found in Homo sapiens (Human).